Here is a 332-residue protein sequence, read N- to C-terminus: Glycerol-3-phosphate dehydrogenase [NAD(P)+] (332 aa).

NADPH-binding residues include S11, W12, R32, R33, and K106. K106 and G136 together coordinate sn-glycerol 3-phosphate. A140 contacts NADPH. K191, D244, S254, R255, and N256 together coordinate sn-glycerol 3-phosphate. K191 acts as the Proton acceptor in catalysis. R255 serves as a coordination point for NADPH. 2 residues coordinate NADPH: V280 and E282.

This sequence belongs to the NAD-dependent glycerol-3-phosphate dehydrogenase family.

Its subcellular location is the cytoplasm. The catalysed reaction is sn-glycerol 3-phosphate + NAD(+) = dihydroxyacetone phosphate + NADH + H(+). It carries out the reaction sn-glycerol 3-phosphate + NADP(+) = dihydroxyacetone phosphate + NADPH + H(+). It functions in the pathway membrane lipid metabolism; glycerophospholipid metabolism. Functionally, catalyzes the reduction of the glycolytic intermediate dihydroxyacetone phosphate (DHAP) to sn-glycerol 3-phosphate (G3P), the key precursor for phospholipid synthesis. The chain is Glycerol-3-phosphate dehydrogenase [NAD(P)+] from Corynebacterium jeikeium (strain K411).